The primary structure comprises 159 residues: Ribosomal RNA large subunit methyltransferase H (159 aa).

S-adenosyl-L-methionine is bound by residues Leu76, Gly108, and 127–132 (FGRLTL).

The protein belongs to the RNA methyltransferase RlmH family. In terms of assembly, homodimer.

It localises to the cytoplasm. It catalyses the reaction pseudouridine(1915) in 23S rRNA + S-adenosyl-L-methionine = N(3)-methylpseudouridine(1915) in 23S rRNA + S-adenosyl-L-homocysteine + H(+). Specifically methylates the pseudouridine at position 1915 (m3Psi1915) in 23S rRNA. The sequence is that of Ribosomal RNA large subunit methyltransferase H from Listeria welshimeri serovar 6b (strain ATCC 35897 / DSM 20650 / CCUG 15529 / CIP 8149 / NCTC 11857 / SLCC 5334 / V8).